Reading from the N-terminus, the 257-residue chain is Pyridoxine 5'-phosphate synthase (257 aa).

Residue Asn6 coordinates 3-amino-2-oxopropyl phosphate. 8-9 (DH) lines the 1-deoxy-D-xylulose 5-phosphate pocket. Arg17 contributes to the 3-amino-2-oxopropyl phosphate binding site. His42 (proton acceptor) is an active-site residue. Positions 44 and 49 each coordinate 1-deoxy-D-xylulose 5-phosphate. Glu69 functions as the Proton acceptor in the catalytic mechanism. A 1-deoxy-D-xylulose 5-phosphate-binding site is contributed by Thr99. His211 functions as the Proton donor in the catalytic mechanism. Residues Gly212 and 233 to 234 (GQ) contribute to the 3-amino-2-oxopropyl phosphate site.

Belongs to the PNP synthase family. Homooctamer; tetramer of dimers.

The protein localises to the cytoplasm. It carries out the reaction 3-amino-2-oxopropyl phosphate + 1-deoxy-D-xylulose 5-phosphate = pyridoxine 5'-phosphate + phosphate + 2 H2O + H(+). The protein operates within cofactor biosynthesis; pyridoxine 5'-phosphate biosynthesis; pyridoxine 5'-phosphate from D-erythrose 4-phosphate: step 5/5. Catalyzes the complicated ring closure reaction between the two acyclic compounds 1-deoxy-D-xylulose-5-phosphate (DXP) and 3-amino-2-oxopropyl phosphate (1-amino-acetone-3-phosphate or AAP) to form pyridoxine 5'-phosphate (PNP) and inorganic phosphate. The polypeptide is Pyridoxine 5'-phosphate synthase (Campylobacter fetus subsp. fetus (strain 82-40)).